A 36-amino-acid polypeptide reads, in one-letter code: Photosystem II reaction center protein Y (36 aa).

Topologically, residues 1–4 (MDSR) are lumenal. A helical membrane pass occupies residues 5–23 (LLVVLIPVLAAASWAVYNI). Over 24–36 (GRVALQQFRKMTS) the chain is Stromal.

The protein belongs to the PsbY family. As to quaternary structure, PSII is composed of 1 copy each of membrane proteins PsbA, PsbB, PsbC, PsbD, PsbE, PsbF, PsbH, PsbI, PsbJ, PsbK, PsbL, PsbM, PsbT, PsbX, PsbY, PsbZ, Psb30/Ycf12, at least 3 peripheral proteins of the oxygen-evolving complex and a large number of cofactors. It forms dimeric complexes.

The protein localises to the plastid. The protein resides in the chloroplast thylakoid membrane. Loosely associated component of the core of photosystem II (PSII), it is not always seen in crystals. PSII is a light-driven water plastoquinone oxidoreductase, using light energy to abstract electrons from H(2)O, generating a proton gradient subsequently used for ATP formation. The protein is Photosystem II reaction center protein Y of Pyropia yezoensis (Susabi-nori).